We begin with the raw amino-acid sequence, 64 residues long: Antimicrobial peptide 1 (64 aa).

An N-terminal signal peptide occupies residues 1 to 26; that stretch reads MAKVSSSLLKFAIVLILVLSMSAIIS. 3 disulfides stabilise this stretch: Cys29–Cys46, Cys36–Cys50, and Cys45–Cys61.

This sequence belongs to the AMP family.

Its subcellular location is the secreted. Its function is as follows. Possesses antifungal and antibacterial activity. The chain is Antimicrobial peptide 1 from Mesembryanthemum crystallinum (Common ice plant).